Here is a 955-residue protein sequence, read N- to C-terminus: Mediator of RNA polymerase II transcription subunit 16 (955 aa).

The protein belongs to the Mediator complex subunit 16 family. In terms of assembly, component of the Mediator complex.

Its subcellular location is the nucleus. In terms of biological role, component of the Mediator complex, a coactivator involved in the regulated transcription of nearly all RNA polymerase II-dependent genes. Mediator functions as a bridge to convey information from gene-specific regulatory proteins to the basal RNA polymerase II transcription machinery. Mediator is recruited to promoters by direct interactions with regulatory proteins and serves as a scaffold for the assembly of a functional preinitiation complex with RNA polymerase II and the general transcription factors. The chain is Mediator of RNA polymerase II transcription subunit 16 (sin4) from Neosartorya fischeri (strain ATCC 1020 / DSM 3700 / CBS 544.65 / FGSC A1164 / JCM 1740 / NRRL 181 / WB 181) (Aspergillus fischerianus).